Reading from the N-terminus, the 246-residue chain is ATP synthase subunit a, chloroplastic (246 aa).

The next 4 membrane-spanning stretches (helical) occupy residues Gly35–Gly55, Val94–Ile114, Ile133–Ser153, and Val202–Ala222.

This sequence belongs to the ATPase A chain family. F-type ATPases have 2 components, CF(1) - the catalytic core - and CF(0) - the membrane proton channel. CF(1) has five subunits: alpha(3), beta(3), gamma(1), delta(1), epsilon(1). CF(0) has four main subunits: a, b, b' and c.

Its subcellular location is the plastid. It is found in the chloroplast thylakoid membrane. Key component of the proton channel; it plays a direct role in the translocation of protons across the membrane. This chain is ATP synthase subunit a, chloroplastic, found in Rhodomonas salina (Cryptomonas salina).